The primary structure comprises 158 residues: Large ribosomal subunit protein uL30 (158 aa).

This sequence belongs to the universal ribosomal protein uL30 family. As to quaternary structure, part of the 50S ribosomal subunit.

The chain is Large ribosomal subunit protein uL30 from Saccharolobus islandicus (strain Y.G.57.14 / Yellowstone #1) (Sulfolobus islandicus).